We begin with the raw amino-acid sequence, 519 residues long: Glutamate--cysteine ligase (519 aa).

The protein belongs to the glutamate--cysteine ligase type 1 family. Type 1 subfamily.

It carries out the reaction L-cysteine + L-glutamate + ATP = gamma-L-glutamyl-L-cysteine + ADP + phosphate + H(+). Its pathway is sulfur metabolism; glutathione biosynthesis; glutathione from L-cysteine and L-glutamate: step 1/2. This is Glutamate--cysteine ligase from Yersinia pseudotuberculosis serotype I (strain IP32953).